The following is a 113-amino-acid chain: Large ribosomal subunit protein bL17 (113 aa).

This sequence belongs to the bacterial ribosomal protein bL17 family. Part of the 50S ribosomal subunit. Contacts protein L32.

The polypeptide is Large ribosomal subunit protein bL17 (Clostridium botulinum (strain Alaska E43 / Type E3)).